The sequence spans 442 residues: Trigger factor (442 aa).

The 86-residue stretch at 162-247 (GDQVTIDAIG…IKAVHTSEPT (86 aa)) folds into the PPIase FKBP-type domain.

It belongs to the FKBP-type PPIase family. Tig subfamily.

The protein localises to the cytoplasm. The enzyme catalyses [protein]-peptidylproline (omega=180) = [protein]-peptidylproline (omega=0). Involved in protein export. Acts as a chaperone by maintaining the newly synthesized protein in an open conformation. Functions as a peptidyl-prolyl cis-trans isomerase. This chain is Trigger factor, found in Rickettsia canadensis (strain McKiel).